Consider the following 412-residue polypeptide: Aspartate aminotransferase, cytoplasmic (412 aa).

Alanine 2 carries the post-translational modification N-acetylalanine. The L-aspartate site is built by glycine 38, tryptophan 140, and asparagine 194. Position 258 is an N6-(pyridoxal phosphate)lysine (lysine 258). Arginine 386 serves as a coordination point for L-aspartate.

This sequence belongs to the class-I pyridoxal-phosphate-dependent aminotransferase family. In terms of assembly, homodimer. Pyridoxal 5'-phosphate serves as cofactor.

It is found in the cytoplasm. It catalyses the reaction L-aspartate + 2-oxoglutarate = oxaloacetate + L-glutamate. It carries out the reaction L-cysteine + 2-oxoglutarate = 2-oxo-3-sulfanylpropanoate + L-glutamate. The enzyme catalyses (2S)-2-aminobutanoate + 2-oxoglutarate = 2-oxobutanoate + L-glutamate. The catalysed reaction is 3-sulfino-L-alanine + 2-oxoglutarate = 3-sulfinopyruvate + L-glutamate. Its function is as follows. Biosynthesis of L-glutamate from L-aspartate or L-cysteine. Important regulator of levels of glutamate, the major excitatory neurotransmitter of the vertebrate central nervous system. Acts as a scavenger of glutamate in brain neuroprotection. The aspartate aminotransferase activity is involved in hepatic glucose synthesis during development and in adipocyte glyceroneogenesis. Using L-cysteine as substrate, regulates levels of mercaptopyruvate, an important source of hydrogen sulfide. Mercaptopyruvate is converted into H(2)S via the action of 3-mercaptopyruvate sulfurtransferase (3MST). Hydrogen sulfide is an important synaptic modulator and neuroprotectant in the brain. The protein is Aspartate aminotransferase, cytoplasmic of Gallus gallus (Chicken).